Consider the following 508-residue polypeptide: Light-independent protochlorophyllide reductase subunit B (508 aa).

Asp36 contributes to the [4Fe-4S] cluster binding site. Asp294 (proton donor) is an active-site residue. A substrate-binding site is contributed by 429-430 (GM).

Belongs to the ChlB/BchB/BchZ family. As to quaternary structure, protochlorophyllide reductase is composed of three subunits; ChlL, ChlN and ChlB. Forms a heterotetramer of two ChlB and two ChlN subunits. Requires [4Fe-4S] cluster as cofactor.

It catalyses the reaction chlorophyllide a + oxidized 2[4Fe-4S]-[ferredoxin] + 2 ADP + 2 phosphate = protochlorophyllide a + reduced 2[4Fe-4S]-[ferredoxin] + 2 ATP + 2 H2O. It participates in porphyrin-containing compound metabolism; chlorophyll biosynthesis (light-independent). Its function is as follows. Component of the dark-operative protochlorophyllide reductase (DPOR) that uses Mg-ATP and reduced ferredoxin to reduce ring D of protochlorophyllide (Pchlide) to form chlorophyllide a (Chlide). This reaction is light-independent. The NB-protein (ChlN-ChlB) is the catalytic component of the complex. This chain is Light-independent protochlorophyllide reductase subunit B, found in Gloeothece citriformis (strain PCC 7424) (Cyanothece sp. (strain PCC 7424)).